The primary structure comprises 280 residues: Para-Rep C2 (280 aa).

The 97-residue stretch at 1–97 (MARRYCFTLN…ETLISEIGIP (97 aa)) folds into the CRESS-DNA virus Rep endonuclease domain. The RCR-1 signature appears at 6–9 (CFTL). Glu-37 and His-45 together coordinate a divalent metal cation. An RCR-2 motif is present at residues 45-47 (HLQ). The short motif at 54–75 (NKIRLGGLKKKFGNRAHWEIAR) is the Nuclear localization signal element. Residue Tyr-84 is the For DNA cleavage activity of the active site. The RCR-3 motif lies at 84–87 (YCCK). The short motif at 97–103 (PVMKGSN) is the Nuclear localization signal element. 172-180 (GSDGGEGKT) serves as a coordination point for ATP.

The protein belongs to the nanoviridea/circoviridae replication-associated protein family. As to quaternary structure, homooligomer (Potential). Rep binds to repeated DNA motifs (iterons). It depends on Mg(2+) as a cofactor. Requires Mn(2+) as cofactor.

Its subcellular location is the host nucleus. The enzyme catalyses ATP + H2O = ADP + phosphate + H(+). Its function is as follows. Initiates and terminates the replication only of its own subviral DNA molecule. The closed circular ssDNA genome is first converted to a superhelical dsDNA. Rep binds a specific hairpin at the genome origin of replication. Introduces an endonucleolytic nick within the intergenic region of the genome, thereby initiating the rolling circle replication (RCR). Following cleavage, binds covalently to the 5'-phosphate of DNA as a tyrosyl ester. The cleavage gives rise to a free 3'-OH that serves as a primer for the cellular DNA polymerase. The polymerase synthesizes the (+) strand DNA by rolling circle mechanism. After one round of replication, a Rep-catalyzed nucleotidyl transfer reaction releases a circular single-stranded virus genome, thereby terminating the replication. Displays origin-specific DNA cleavage, nucleotidyl transferase, ATPase and helicase activities. The sequence is that of Para-Rep C2 (C2) from Subterranean clover stunt C2 alphasatellite (SCSC2A).